Reading from the N-terminus, the 338-residue chain is Thiamine thiazole synthase (338 aa).

Residues 1–43 form a disordered region; that stretch reads MSPVATESMYKPTTINQTAHQQAMDPLKSKQQSNATVNKPAFK. Polar residues predominate over residues 11 to 21; the sequence is KPTTINQTAHQ. Residues alanine 91, 112–113, glycine 120, and cysteine 185 contribute to the substrate site; that span reads ES. Cysteine 221 carries the post-translational modification 2,3-didehydroalanine (Cys). Residues aspartate 223, histidine 238, methionine 290, and 300–302 each bind substrate; that span reads RMG.

Belongs to the THI4 family. As to quaternary structure, homooctamer. It depends on Fe cation as a cofactor. In terms of processing, during the catalytic reaction, a sulfide is transferred from Cys-221 to a reaction intermediate, generating a dehydroalanine residue. As to expression, highly expressed in haustoria, and only in low amounts in intercellular hyphae. Found in the basal hyphae of the uredia, but not in the pedicels and only at very low levels in uredospores.

It localises to the cytoplasm. It is found in the nucleus. The enzyme catalyses [ADP-thiazole synthase]-L-cysteine + glycine + NAD(+) = [ADP-thiazole synthase]-dehydroalanine + ADP-5-ethyl-4-methylthiazole-2-carboxylate + nicotinamide + 3 H2O + 2 H(+). Involved in biosynthesis of the thiamine precursor thiazole. Catalyzes the conversion of NAD and glycine to adenosine diphosphate 5-(2-hydroxyethyl)-4-methylthiazole-2-carboxylic acid (ADT), an adenylated thiazole intermediate. The reaction includes an iron-dependent sulfide transfer from a conserved cysteine residue of the protein to a thiazole intermediate. The enzyme can only undergo a single turnover, which suggests it is a suicide enzyme. May have additional roles in adaptation to various stress conditions and in DNA damage tolerance. This is Thiamine thiazole synthase (THI2) from Uromyces fabae (Rust fungus).